A 487-amino-acid polypeptide reads, in one-letter code: Probable cytosol aminopeptidase (487 aa).

Mn(2+) is bound by residues lysine 253 and aspartate 258. Lysine 265 is an active-site residue. The Mn(2+) site is built by aspartate 277, aspartate 337, and glutamate 339. Arginine 341 is a catalytic residue.

The protein belongs to the peptidase M17 family. Mn(2+) serves as cofactor.

The protein localises to the cytoplasm. The enzyme catalyses Release of an N-terminal amino acid, Xaa-|-Yaa-, in which Xaa is preferably Leu, but may be other amino acids including Pro although not Arg or Lys, and Yaa may be Pro. Amino acid amides and methyl esters are also readily hydrolyzed, but rates on arylamides are exceedingly low.. It carries out the reaction Release of an N-terminal amino acid, preferentially leucine, but not glutamic or aspartic acids.. Functionally, presumably involved in the processing and regular turnover of intracellular proteins. Catalyzes the removal of unsubstituted N-terminal amino acids from various peptides. The protein is Probable cytosol aminopeptidase of Parasynechococcus marenigrum (strain WH8102).